We begin with the raw amino-acid sequence, 316 residues long: Ribosomal RNA small subunit methyltransferase H (316 aa).

Residues 35-37, Asp55, Phe84, Asp105, and Gln112 each bind S-adenosyl-L-methionine; that span reads AGH.

The protein belongs to the methyltransferase superfamily. RsmH family.

The protein resides in the cytoplasm. It catalyses the reaction cytidine(1402) in 16S rRNA + S-adenosyl-L-methionine = N(4)-methylcytidine(1402) in 16S rRNA + S-adenosyl-L-homocysteine + H(+). Specifically methylates the N4 position of cytidine in position 1402 (C1402) of 16S rRNA. The sequence is that of Ribosomal RNA small subunit methyltransferase H from Streptococcus pneumoniae (strain P1031).